A 387-amino-acid polypeptide reads, in one-letter code: S-adenosylmethionine synthase (387 aa).

Histidine 16 provides a ligand contact to ATP. Aspartate 18 contributes to the Mg(2+) binding site. Glutamate 44 serves as a coordination point for K(+). 2 residues coordinate L-methionine: glutamate 57 and glutamine 100. The segment at 100 to 110 (QSPDIAQGVDR) is flexible loop. Residues 167–169 (DAK), 232–233 (RF), aspartate 241, 247–248 (RK), alanine 264, and lysine 268 each bind ATP. Aspartate 241 provides a ligand contact to L-methionine. Lysine 272 provides a ligand contact to L-methionine.

Belongs to the AdoMet synthase family. In terms of assembly, homotetramer; dimer of dimers. Mg(2+) serves as cofactor. K(+) is required as a cofactor.

Its subcellular location is the cytoplasm. It catalyses the reaction L-methionine + ATP + H2O = S-adenosyl-L-methionine + phosphate + diphosphate. Its pathway is amino-acid biosynthesis; S-adenosyl-L-methionine biosynthesis; S-adenosyl-L-methionine from L-methionine: step 1/1. Its function is as follows. Catalyzes the formation of S-adenosylmethionine (AdoMet) from methionine and ATP. The overall synthetic reaction is composed of two sequential steps, AdoMet formation and the subsequent tripolyphosphate hydrolysis which occurs prior to release of AdoMet from the enzyme. The polypeptide is S-adenosylmethionine synthase (Cupriavidus pinatubonensis (strain JMP 134 / LMG 1197) (Cupriavidus necator (strain JMP 134))).